The sequence spans 162 residues: Mediator of RNA polymerase II transcription subunit 31 (162 aa).

A disordered region spans residues 131-162 (VQGGQNVEAGDTGHNEGDQGTQQDKENIALKT). The span at 141–162 (DTGHNEGDQGTQQDKENIALKT) shows a compositional bias: basic and acidic residues.

It belongs to the Mediator complex subunit 31 family. As to quaternary structure, component of the Mediator complex.

The protein localises to the nucleus. Component of the Mediator complex, a coactivator involved in the regulated transcription of nearly all RNA polymerase II-dependent genes. Mediator functions as a bridge to convey information from gene-specific regulatory proteins to the basal RNA polymerase II transcription machinery. Mediator is recruited to promoters by direct interactions with regulatory proteins and serves as a scaffold for the assembly of a functional preinitiation complex with RNA polymerase II and the general transcription factors. This is Mediator of RNA polymerase II transcription subunit 31 (soh1) from Aspergillus fumigatus (strain ATCC MYA-4609 / CBS 101355 / FGSC A1100 / Af293) (Neosartorya fumigata).